Consider the following 334-residue polypeptide: Transaldolase (334 aa).

At serine 2 the chain carries N-acetylserine. Lysine 143 functions as the Schiff-base intermediate with substrate in the catalytic mechanism.

This sequence belongs to the transaldolase family. Type 1 subfamily. Homodimer.

The enzyme catalyses D-sedoheptulose 7-phosphate + D-glyceraldehyde 3-phosphate = D-erythrose 4-phosphate + beta-D-fructose 6-phosphate. Its pathway is carbohydrate degradation; pentose phosphate pathway; D-glyceraldehyde 3-phosphate and beta-D-fructose 6-phosphate from D-ribose 5-phosphate and D-xylulose 5-phosphate (non-oxidative stage): step 2/3. Transaldolase is important for the balance of metabolites in the pentose-phosphate pathway. The sequence is that of Transaldolase (TAL1) from Kluyveromyces lactis (strain ATCC 8585 / CBS 2359 / DSM 70799 / NBRC 1267 / NRRL Y-1140 / WM37) (Yeast).